The following is a 470-amino-acid chain: uncharacterized protein (470 aa).

Positions Ser-418 to Asn-453 form a coiled coil. Residues Glu-423–Leu-470 form a disordered region. Residues Glu-426–Lys-441 show a composition bias toward basic and acidic residues. A compositionally biased stretch (low complexity) spans Gln-448 to Gly-457.

This is an uncharacterized protein from Acidianus bottle-shaped virus (isolate Italy/Pozzuoli) (ABV).